We begin with the raw amino-acid sequence, 155 residues long: Small ribosomal subunit protein uS7cz/uS7cy (155 aa).

The protein belongs to the universal ribosomal protein uS7 family. As to quaternary structure, part of the 30S ribosomal subunit.

Its subcellular location is the plastid. The protein localises to the chloroplast. Its function is as follows. One of the primary rRNA binding proteins, it binds directly to 16S rRNA where it nucleates assembly of the head domain of the 30S subunit. The sequence is that of Small ribosomal subunit protein uS7cz/uS7cy (rps7-A) from Ceratophyllum demersum (Rigid hornwort).